We begin with the raw amino-acid sequence, 258 residues long: Global transcriptional regulator CodY (258 aa).

The GAF domain stretch occupies residues 1-156 (MSILLNKTRK…SATIVGLEIL (156 aa)). Residues 204–223 (ASKIADKVGITRSVIVNALR) constitute a DNA-binding region (H-T-H motif).

The protein belongs to the CodY family.

Its subcellular location is the cytoplasm. Functionally, DNA-binding global transcriptional regulator which is involved in the adaptive response to starvation and acts by directly or indirectly controlling the expression of numerous genes in response to nutrient availability. During rapid exponential growth, CodY is highly active and represses genes whose products allow adaptation to nutrient depletion. The chain is Global transcriptional regulator CodY from Clostridium acetobutylicum (strain ATCC 824 / DSM 792 / JCM 1419 / IAM 19013 / LMG 5710 / NBRC 13948 / NRRL B-527 / VKM B-1787 / 2291 / W).